A 270-amino-acid polypeptide reads, in one-letter code: Acyl-[acyl-carrier-protein]--UDP-N-acetylglucosamine O-acyltransferase (270 aa).

It belongs to the transferase hexapeptide repeat family. LpxA subfamily. Homotrimer.

Its subcellular location is the cytoplasm. It carries out the reaction a (3R)-hydroxyacyl-[ACP] + UDP-N-acetyl-alpha-D-glucosamine = a UDP-3-O-[(3R)-3-hydroxyacyl]-N-acetyl-alpha-D-glucosamine + holo-[ACP]. Its pathway is glycolipid biosynthesis; lipid IV(A) biosynthesis; lipid IV(A) from (3R)-3-hydroxytetradecanoyl-[acyl-carrier-protein] and UDP-N-acetyl-alpha-D-glucosamine: step 1/6. In terms of biological role, involved in the biosynthesis of lipid A, a phosphorylated glycolipid that anchors the lipopolysaccharide to the outer membrane of the cell. In Sinorhizobium medicae (strain WSM419) (Ensifer medicae), this protein is Acyl-[acyl-carrier-protein]--UDP-N-acetylglucosamine O-acyltransferase.